The primary structure comprises 214 residues: Pyridoxine/pyridoxamine 5'-phosphate oxidase (214 aa).

Substrate contacts are provided by residues 8–11 (RINY) and K66. Residues 61–66 (RIVLVK), 76–77 (FT), R82, K83, and Q105 each bind FMN. Positions 123, 127, and 131 each coordinate substrate. FMN contacts are provided by residues 140–141 (QS) and W184. Residue 190–192 (RLH) coordinates substrate. FMN is bound at residue R194.

This sequence belongs to the pyridoxamine 5'-phosphate oxidase family. Homodimer. It depends on FMN as a cofactor.

It carries out the reaction pyridoxamine 5'-phosphate + O2 + H2O = pyridoxal 5'-phosphate + H2O2 + NH4(+). The catalysed reaction is pyridoxine 5'-phosphate + O2 = pyridoxal 5'-phosphate + H2O2. Its pathway is cofactor metabolism; pyridoxal 5'-phosphate salvage; pyridoxal 5'-phosphate from pyridoxamine 5'-phosphate: step 1/1. It functions in the pathway cofactor metabolism; pyridoxal 5'-phosphate salvage; pyridoxal 5'-phosphate from pyridoxine 5'-phosphate: step 1/1. Catalyzes the oxidation of either pyridoxine 5'-phosphate (PNP) or pyridoxamine 5'-phosphate (PMP) into pyridoxal 5'-phosphate (PLP). The sequence is that of Pyridoxine/pyridoxamine 5'-phosphate oxidase from Burkholderia multivorans (strain ATCC 17616 / 249).